The sequence spans 110 residues: Large ribosomal subunit protein uL22 (110 aa).

It belongs to the universal ribosomal protein uL22 family. As to quaternary structure, part of the 50S ribosomal subunit.

In terms of biological role, this protein binds specifically to 23S rRNA; its binding is stimulated by other ribosomal proteins, e.g. L4, L17, and L20. It is important during the early stages of 50S assembly. It makes multiple contacts with different domains of the 23S rRNA in the assembled 50S subunit and ribosome. The globular domain of the protein is located near the polypeptide exit tunnel on the outside of the subunit, while an extended beta-hairpin is found that lines the wall of the exit tunnel in the center of the 70S ribosome. The protein is Large ribosomal subunit protein uL22 of Campylobacter fetus subsp. fetus (strain 82-40).